Consider the following 475-residue polypeptide: Protein transport protein Sec61 subunit alpha (475 aa).

Transmembrane regions (helical) follow at residues 33 to 53, 76 to 96, 118 to 138, 145 to 165, 173 to 193, 241 to 261, 289 to 309, 354 to 374, 420 to 440, and 441 to 461; these read LWTA…LFGI, LMEL…LLAG, LFGM…GMYG, AGIC…VLLL, YGLG…TIVW, NLMN…FQGF, IPII…QMLA, FLDP…CAFF, AAFG…IGAI, and GSGT…EIFV.

The protein belongs to the SecY/SEC61-alpha family. The SEC61 channel-forming translocon complex consists of channel-forming core components SEC61A1, SEC61B and SEC61G and different auxiliary components such as SEC62 and SEC63. The SEC61 channel associates with the multi-pass translocon (MPT) complex. As to expression, expressed predominantly in epidermal cells of the embryo.

It is found in the endoplasmic reticulum membrane. In terms of biological role, component of SEC61 channel-forming translocon complex that mediates transport of signal peptide-containing precursor polypeptides across the endoplasmic reticulum (ER). Forms a ribosome receptor and a gated pore in the ER membrane, both functions required for cotranslational translocation of nascent polypeptides. May cooperate with auxiliary protein SEC62, SEC63 and HSPA5/BiP to enable post-translational transport of small presecretory proteins. The SEC61 channel is also involved in ER membrane insertion of transmembrane proteins: it mediates membrane insertion of the first few transmembrane segments of proteins, while insertion of subsequent transmembrane regions of multi-pass membrane proteins is mediated by the multi-pass translocon (MPT) complex. This chain is Protein transport protein Sec61 subunit alpha, found in Halocynthia roretzi (Sea squirt).